A 401-amino-acid polypeptide reads, in one-letter code: Probable aspartate/prephenate aminotransferase (401 aa).

Residues G39, W125, and N175 each contribute to the L-aspartate site. Residue K239 is modified to N6-(pyridoxal phosphate)lysine. An L-aspartate-binding site is contributed by R375.

Belongs to the class-I pyridoxal-phosphate-dependent aminotransferase family. As to quaternary structure, homodimer. Requires pyridoxal 5'-phosphate as cofactor.

It is found in the cytoplasm. The enzyme catalyses L-aspartate + 2-oxoglutarate = oxaloacetate + L-glutamate. It carries out the reaction L-arogenate + 2-oxoglutarate = prephenate + L-glutamate. Functionally, catalyzes the reversible conversion of aspartate and 2-oxoglutarate to glutamate and oxaloacetate. Can also transaminate prephenate in the presence of glutamate. This Rickettsia conorii (strain ATCC VR-613 / Malish 7) protein is Probable aspartate/prephenate aminotransferase (aatA).